A 73-amino-acid chain; its full sequence is UPF0154 protein BCG9842_B1526 (73 aa).

Residues 3-23 (IWLGILVGVVALVAGVALGFF) traverse the membrane as a helical segment.

Belongs to the UPF0154 family.

It localises to the cell membrane. This is UPF0154 protein BCG9842_B1526 from Bacillus cereus (strain G9842).